The sequence spans 343 residues: Heat-inducible transcription repressor HrcA (343 aa).

It belongs to the HrcA family.

Functionally, negative regulator of class I heat shock genes (grpE-dnaK-dnaJ and groELS operons). Prevents heat-shock induction of these operons. This is Heat-inducible transcription repressor HrcA from Mycobacterium tuberculosis (strain ATCC 25177 / H37Ra).